Reading from the N-terminus, the 198-residue chain is ATP-dependent Clp protease proteolytic subunit (198 aa).

Ser103 functions as the Nucleophile in the catalytic mechanism. His128 is an active-site residue.

Belongs to the peptidase S14 family. In terms of assembly, fourteen ClpP subunits assemble into 2 heptameric rings which stack back to back to give a disk-like structure with a central cavity, resembling the structure of eukaryotic proteasomes.

The protein localises to the cytoplasm. It carries out the reaction Hydrolysis of proteins to small peptides in the presence of ATP and magnesium. alpha-casein is the usual test substrate. In the absence of ATP, only oligopeptides shorter than five residues are hydrolyzed (such as succinyl-Leu-Tyr-|-NHMec, and Leu-Tyr-Leu-|-Tyr-Trp, in which cleavage of the -Tyr-|-Leu- and -Tyr-|-Trp bonds also occurs).. Cleaves peptides in various proteins in a process that requires ATP hydrolysis. Has a chymotrypsin-like activity. Plays a major role in the degradation of misfolded proteins. This Ruthia magnifica subsp. Calyptogena magnifica protein is ATP-dependent Clp protease proteolytic subunit.